A 287-amino-acid chain; its full sequence is mRNA-capping enzyme small subunit (287 aa).

As to quaternary structure, heterodimer of a large and a small subunit.

It localises to the virion. It carries out the reaction a 5'-end (5'-triphosphoguanosine)-ribonucleoside in mRNA + S-adenosyl-L-methionine = a 5'-end (N(7)-methyl 5'-triphosphoguanosine)-ribonucleoside in mRNA + S-adenosyl-L-homocysteine. Functionally, catalyzes the last reaction in the mRNA cap formation pathway. The polypeptide is mRNA-capping enzyme small subunit (Erythrocebus patas (Red guenon)).